Here is a 55-residue protein sequence, read N- to C-terminus: ATP synthase F(0) complex subunit 8 (55 aa).

Residues 7–24 (APWFSIMIMTWLTLALLI) traverse the membrane as a helical segment. The tract at residues 34 to 55 (TNPPSSKPSLTTKPTPWAWPWT) is disordered.

Belongs to the ATPase protein 8 family. As to quaternary structure, component of the ATP synthase complex composed at least of ATP5F1A/subunit alpha, ATP5F1B/subunit beta, ATP5MC1/subunit c (homooctomer), MT-ATP6/subunit a, MT-ATP8/subunit 8, ATP5ME/subunit e, ATP5MF/subunit f, ATP5MG/subunit g, ATP5MK/subunit k, ATP5MJ/subunit j, ATP5F1C/subunit gamma, ATP5F1D/subunit delta, ATP5F1E/subunit epsilon, ATP5PF/subunit F6, ATP5PB/subunit b, ATP5PD/subunit d, ATP5PO/subunit OSCP. ATP synthase complex consists of a soluble F(1) head domain (subunits alpha(3) and beta(3)) - the catalytic core - and a membrane F(0) domain - the membrane proton channel (subunits c, a, 8, e, f, g, k and j). These two domains are linked by a central stalk (subunits gamma, delta, and epsilon) rotating inside the F1 region and a stationary peripheral stalk (subunits F6, b, d, and OSCP).

The protein localises to the mitochondrion membrane. Subunit 8, of the mitochondrial membrane ATP synthase complex (F(1)F(0) ATP synthase or Complex V) that produces ATP from ADP in the presence of a proton gradient across the membrane which is generated by electron transport complexes of the respiratory chain. ATP synthase complex consist of a soluble F(1) head domain - the catalytic core - and a membrane F(1) domain - the membrane proton channel. These two domains are linked by a central stalk rotating inside the F(1) region and a stationary peripheral stalk. During catalysis, ATP synthesis in the catalytic domain of F(1) is coupled via a rotary mechanism of the central stalk subunits to proton translocation. In vivo, can only synthesize ATP although its ATP hydrolase activity can be activated artificially in vitro. Part of the complex F(0) domain. This is ATP synthase F(0) complex subunit 8 from Aythya americana (Redhead).